Here is a 540-residue protein sequence, read N- to C-terminus: Chaperonin GroEL (540 aa).

Residues 30 to 33 (TLGP), Lys-51, 87 to 91 (DGTTT), Gly-415, 479 to 481 (NAA), and Asp-495 each bind ATP.

Belongs to the chaperonin (HSP60) family. Forms a cylinder of 14 subunits composed of two heptameric rings stacked back-to-back. Interacts with the co-chaperonin GroES.

The protein localises to the cytoplasm. The catalysed reaction is ATP + H2O + a folded polypeptide = ADP + phosphate + an unfolded polypeptide.. Its function is as follows. Together with its co-chaperonin GroES, plays an essential role in assisting protein folding. The GroEL-GroES system forms a nano-cage that allows encapsulation of the non-native substrate proteins and provides a physical environment optimized to promote and accelerate protein folding. The protein is Chaperonin GroEL of Pectobacterium carotovorum subsp. carotovorum (Erwinia carotovora subsp. carotovora).